The primary structure comprises 438 residues: MKPLRYTASALALGLALMANAQAVTTIPFWHSMEGELGKEVDSLAQRFNAENPDYKIVPTYKGNYEQNLSAGIAAFRTGNAPAILQVYEVGTATMMASKAIKPVYDVFKEAGIQFDESQFVPTVSGYYSDSKTGHLLSQPFNSSTPVLYYNKDAFKKAGLDPEQPPKTWQDLADYAAKLKASGMKCGYASGWQGWIQLENFSAWNGLPFASKNNGFDGTDAVLEFNKPEQVKHIAMLEEMNKKGDFSYVGRKDESTEKFYNGDCAMTTASSGSLANIREYAKFNYGVGMMPYDADAKDAPQNAIIGGASLWVMQGKDKETYTGVAKFLDFLAKPENAAEWHQKTGYLPITKAAYDLTREQGFYEKNPGADIATRQMLNKPPLPFTKGLRLGNMPQIRVIVDEELESVWTGKKTPQQALDTAVERGNQLLRRFEKSTKS.

The signal sequence occupies residues M1–A23. The sn-glycerol 3-phosphate site is built by Y65, E89, S144, S270, G307, Y346, and R397.

This sequence belongs to the bacterial solute-binding protein 1 family. As to quaternary structure, the complex is composed of two ATP-binding proteins (UgpC), two transmembrane proteins (UgpA and UgpE) and a solute-binding protein (UgpB).

It is found in the periplasm. Functionally, part of the ABC transporter complex UgpBAEC involved in sn-glycerol-3-phosphate (G3P) import. Binds G3P. The chain is sn-glycerol-3-phosphate-binding periplasmic protein UgpB (ugpB) from Escherichia coli O6:K15:H31 (strain 536 / UPEC).